Here is a 395-residue protein sequence, read N- to C-terminus: MFNYKILEDEMENLKNEGLYINIRTLESPQGAWIVVNGKRVLNLCSNNYLGFASDERLKQAAKKAIDEWGVGPGAVRTIAGTMKIHEELEKALAEFKGADATIFLQSGFIANQAAIPTVFGDENDAIISDELNHASIIDGVRLSKAKRYVYKHNDMNELEARLKEARDVQKARRILIITDGVFSMDGDIAPLPEIVELAEKYEAAVMVDDAHGEGVLGRGGRGIVDHFGLHGRVDMEIGTLSKAFGVLGGYIAGKETLIRYLKQKARPFLFSTGLTPADVAACLEAVKILQESDERVKRLWDNANYFKSEMKKLGFDLGVSQTPITPVMLYDAKVASQFSRELFEEGIFAQSIGYPTVPKGKARIRVMISAVHTKEDLDFALDKFEKVGKKFAII.

108–109 (GF) serves as a coordination point for pyridoxal 5'-phosphate. His134 lines the substrate pocket. Pyridoxal 5'-phosphate is bound by residues Ser184, 209-212 (DDAH), and 240-243 (TLSK). Lys243 is subject to N6-(pyridoxal phosphate)lysine. Position 357 (Thr357) interacts with substrate.

The protein belongs to the class-II pyridoxal-phosphate-dependent aminotransferase family. BioF subfamily. As to quaternary structure, homodimer. Pyridoxal 5'-phosphate is required as a cofactor.

It carries out the reaction 6-carboxyhexanoyl-[ACP] + L-alanine + H(+) = (8S)-8-amino-7-oxononanoate + holo-[ACP] + CO2. Its pathway is cofactor biosynthesis; biotin biosynthesis. Its function is as follows. Catalyzes the decarboxylative condensation of pimeloyl-[acyl-carrier protein] and L-alanine to produce 8-amino-7-oxononanoate (AON), [acyl-carrier protein], and carbon dioxide. This is 8-amino-7-oxononanoate synthase from Fervidobacterium nodosum (strain ATCC 35602 / DSM 5306 / Rt17-B1).